Reading from the N-terminus, the 211-residue chain is Proteasome subunit beta 1 (211 aa).

Residues 1 to 17 (MVIMGNELQLENKILKG) constitute a propeptide, removed in mature form; by autocatalysis. The active-site Nucleophile is threonine 18.

This sequence belongs to the peptidase T1B family. As to quaternary structure, the 20S proteasome core is composed of 14 alpha and 14 beta subunits that assemble into four stacked heptameric rings, resulting in a barrel-shaped structure. The two inner rings, each composed of seven catalytic beta subunits, are sandwiched by two outer rings, each composed of seven alpha subunits. The catalytic chamber with the active sites is on the inside of the barrel. Has a gated structure, the ends of the cylinder being occluded by the N-termini of the alpha-subunits. Is capped at one or both ends by the proteasome regulatory ATPase, PAN.

It localises to the cytoplasm. It catalyses the reaction Cleavage of peptide bonds with very broad specificity.. With respect to regulation, the formation of the proteasomal ATPase PAN-20S proteasome complex, via the docking of the C-termini of PAN into the intersubunit pockets in the alpha-rings, triggers opening of the gate for substrate entry. Interconversion between the open-gate and close-gate conformations leads to a dynamic regulation of the 20S proteasome proteolysis activity. In terms of biological role, component of the proteasome core, a large protease complex with broad specificity involved in protein degradation. The chain is Proteasome subunit beta 1 from Saccharolobus islandicus (strain M.16.27) (Sulfolobus islandicus).